Consider the following 241-residue polypeptide: Uridylate kinase (241 aa).

Residues 10 to 13 (KLSG), Gly53, and Arg57 contribute to the ATP site. UMP contacts are provided by residues Asp72 and 133–140 (AGSPYFST). ATP is bound by residues Asn161, Tyr167, and Asp170.

Belongs to the UMP kinase family. In terms of assembly, homohexamer.

It localises to the cytoplasm. The catalysed reaction is UMP + ATP = UDP + ADP. It functions in the pathway pyrimidine metabolism; CTP biosynthesis via de novo pathway; UDP from UMP (UMPK route): step 1/1. With respect to regulation, inhibited by UTP. Its function is as follows. Catalyzes the reversible phosphorylation of UMP to UDP. The chain is Uridylate kinase from Onion yellows phytoplasma (strain OY-M).